A 663-amino-acid polypeptide reads, in one-letter code: UvrABC system protein B (663 aa).

One can recognise a Helicase ATP-binding domain in the interval 31 to 271; that stretch reads DNIEGGEKAQ…EQSISKIQAE (241 aa). An ATP-binding site is contributed by 44-51; it reads GATGTGKT. The short motif at 97–120 is the Beta-hairpin element; the sequence is YYDYYQPEAYVPSSDTYIEKDSSV. Residues 435 to 601 form the Helicase C-terminal domain; it reads QMDDLLGEIN…TIKKDIRDLI (167 aa). Positions 627 to 662 constitute a UVR domain; sequence QEAIKQLQKNMQEAAELLDFELAAQLRDLILELKAM.

The protein belongs to the UvrB family. Forms a heterotetramer with UvrA during the search for lesions. Interacts with UvrC in an incision complex.

It localises to the cytoplasm. Functionally, the UvrABC repair system catalyzes the recognition and processing of DNA lesions. A damage recognition complex composed of 2 UvrA and 2 UvrB subunits scans DNA for abnormalities. Upon binding of the UvrA(2)B(2) complex to a putative damaged site, the DNA wraps around one UvrB monomer. DNA wrap is dependent on ATP binding by UvrB and probably causes local melting of the DNA helix, facilitating insertion of UvrB beta-hairpin between the DNA strands. Then UvrB probes one DNA strand for the presence of a lesion. If a lesion is found the UvrA subunits dissociate and the UvrB-DNA preincision complex is formed. This complex is subsequently bound by UvrC and the second UvrB is released. If no lesion is found, the DNA wraps around the other UvrB subunit that will check the other stand for damage. The protein is UvrABC system protein B of Streptococcus equi subsp. zooepidemicus (strain H70).